A 618-amino-acid polypeptide reads, in one-letter code: Sulfite reductase [NADPH] flavoprotein alpha-component (618 aa).

The Flavodoxin-like domain maps to 64–202; that stretch reads VTLISASQTG…QAQQWRQQVV (139 aa). Residues 70-75, 117-120, and 153-162 each bind FMN; these read SQTGNA, STQG, and LGDTSYEHFC. Positions 253-467 constitute an FAD-binding FR-type domain; it reads TAPLTAQLSV…IEHNDNFRLP (215 aa). Residues T341, K375, 405-408, 423-425, Y429, and 438-441 each bind FAD; these read RLYS, TVG, and GGAS. Residues 538–539, 544–548, and D580 contribute to the NADP(+) site; these read SR and KIYVQ. FAD is bound at residue Y618.

The protein belongs to the NADPH-dependent sulphite reductase flavoprotein subunit CysJ family. This sequence in the N-terminal section; belongs to the flavodoxin family. In the C-terminal section; belongs to the flavoprotein pyridine nucleotide cytochrome reductase family. Alpha(8)-beta(8). The alpha component is a flavoprotein, the beta component is a hemoprotein. It depends on FAD as a cofactor. Requires FMN as cofactor.

It carries out the reaction hydrogen sulfide + 3 NADP(+) + 3 H2O = sulfite + 3 NADPH + 4 H(+). Its pathway is sulfur metabolism; hydrogen sulfide biosynthesis; hydrogen sulfide from sulfite (NADPH route): step 1/1. Its function is as follows. Component of the sulfite reductase complex that catalyzes the 6-electron reduction of sulfite to sulfide. This is one of several activities required for the biosynthesis of L-cysteine from sulfate. The flavoprotein component catalyzes the electron flow from NADPH -&gt; FAD -&gt; FMN to the hemoprotein component. The polypeptide is Sulfite reductase [NADPH] flavoprotein alpha-component (Yersinia pseudotuberculosis serotype I (strain IP32953)).